Reading from the N-terminus, the 303-residue chain is HTH-type transcriptional regulator CatM (303 aa).

Residues 1 to 58 (MELRHLRYFVTVVEEQSISKAAEKLCIAQPPLSRQIQKLEEELGIQLFERGFRPAKVT) enclose the HTH lysR-type domain. Residues 18-37 (ISKAAEKLCIAQPPLSRQIQ) constitute a DNA-binding region (H-T-H motif). Serine 99 and threonine 128 together coordinate cis,cis-muconate.

Belongs to the LysR transcriptional regulatory family. Homotetramer in solution.

Its function is as follows. Positively regulates the expression of catA, catBCIJFD and benPK in response to cis,cis-muconate. It binds to the catB-catM intercistronic region, to a specific sequence upstream of catA and to the benPK promoter region. Can also repress pca genes. In Acinetobacter baylyi (strain ATCC 33305 / BD413 / ADP1), this protein is HTH-type transcriptional regulator CatM (catM).